A 361-amino-acid polypeptide reads, in one-letter code: Tyrosine--tRNA ligase (361 aa).

L-tyrosine-binding residues include Y36, Y162, Q166, D169, and Q184. A 'KMSKS' region motif is present at residues 236-240 (KMSKS). Residue K239 participates in ATP binding.

It belongs to the class-I aminoacyl-tRNA synthetase family. TyrS type 4 subfamily. As to quaternary structure, homodimer.

Its subcellular location is the cytoplasm. It catalyses the reaction tRNA(Tyr) + L-tyrosine + ATP = L-tyrosyl-tRNA(Tyr) + AMP + diphosphate + H(+). In terms of biological role, catalyzes the attachment of tyrosine to tRNA(Tyr) in a two-step reaction: tyrosine is first activated by ATP to form Tyr-AMP and then transferred to the acceptor end of tRNA(Tyr). The sequence is that of Tyrosine--tRNA ligase from Saccharolobus islandicus (strain Y.N.15.51 / Yellowstone #2) (Sulfolobus islandicus).